Consider the following 521-residue polypeptide: Occludin (521 aa).

Topologically, residues Met1–Arg66 are cytoplasmic. Residues Ser60–Arg268 form the MARVEL domain. A helical membrane pass occupies residues Ile67 to Trp89. Topologically, residues Asp90 to Arg134 are extracellular. A helical membrane pass occupies residues Ala135–Val159. The Cytoplasmic segment spans residues Ile160–Arg169. Residues Tyr170 to Met194 form a helical membrane-spanning segment. Residues Gly195–Glu242 lie on the Extracellular side of the membrane. Cysteines 215 and 236 form a disulfide. A helical transmembrane segment spans residues Ala243–Val264. The Cytoplasmic portion of the chain corresponds to Lys265 to Thr521. Ser301 bears the Phosphoserine mark. A disordered region spans residues Ser301–Ser407. Thr304 carries the post-translational modification Phosphothreonine. Residues Ser312, Ser320, and Ser339 each carry the phosphoserine modification. Position 367 is a phosphotyrosine (Tyr367). Phosphoserine is present on residues Ser368 and Ser369. The span at Ala380–Pro389 shows a compositional bias: basic residues. Positions Lys390–Thr399 are enriched in basic and acidic residues. A phosphotyrosine mark is found at Tyr397 and Tyr401. Residues Thr402 and Thr403 each carry the phosphothreonine; by PKC/PRKCH modification. Ser407 carries the post-translational modification Phosphoserine. Residues Glu413–Thr521 form the OCEL domain. The stretch at Ser424 to Gly488 forms a coiled coil. Ser489 is subject to Phosphoserine.

It belongs to the ELL/occludin family. Interacts with TJP1/ZO1. Interacts with VAPA. Interacts with CLDN1, CLDN6, CLDN9, CLDN11, CLDN12 and CLDN17. Interacts with PLSCR1. Interacts with LSR, ILDR1 and ILDR2. Interacts with TJP2/ZO2. Post-translationally, dephosphorylated by PTPRJ. Less-phosphorylated forms are found in basolateral membrane, cytosol and tight junction. More-heavily phosphorylated forms are concentrated exclusively in tight junction. Localized at tight junctions of both epithelial and endothelial cells.

It localises to the cell membrane. It is found in the cell junction. Its subcellular location is the tight junction. Functionally, may play a role in the formation and regulation of the tight junction (TJ) paracellular permeability barrier. Interacts with ZO-1. This is Occludin (OCLN) from Canis lupus familiaris (Dog).